Here is a 411-residue protein sequence, read N- to C-terminus: Carbamoyl phosphate synthase arginine-specific small chain (411 aa).

Positions 50, 232, and 234 each coordinate L-glutamine. The 192-residue stretch at 185–376 folds into the Glutamine amidotransferase type-1 domain; the sequence is NVALIDCGVK…FDNIEKYQLQ (192 aa). C264 acts as the Nucleophile in catalysis. L-glutamine-binding residues include L265, Q268, N306, G308, and Y309. Residues H349 and E351 contribute to the active site.

It belongs to the CarA family. Heterodimer composed of 2 chains; the small (or glutamine) chain promotes the hydrolysis of glutamine to ammonia, which is used by the large (or ammonia) chain to synthesize carbamoyl phosphate.

Its subcellular location is the cytoplasm. The enzyme catalyses hydrogencarbonate + L-glutamine + 2 ATP + H2O = carbamoyl phosphate + L-glutamate + 2 ADP + phosphate + 2 H(+). It carries out the reaction L-glutamine + H2O = L-glutamate + NH4(+). It functions in the pathway amino-acid biosynthesis; L-arginine biosynthesis; carbamoyl phosphate from bicarbonate: step 1/1. Small subunit of the arginine-specific carbamoyl phosphate synthase (CPSase). CPSase catalyzes the formation of carbamoyl phosphate from the ammonia moiety of glutamine, carbonate, and phosphate donated by ATP, constituting the first step of 2 biosynthetic pathways, one leading to arginine and/or urea and the other to pyrimidine nucleotides. The small subunit (glutamine amidotransferase) binds and cleaves glutamine to supply the large subunit with the substrate ammonia. This Saccharomyces cerevisiae (strain ATCC 204508 / S288c) (Baker's yeast) protein is Carbamoyl phosphate synthase arginine-specific small chain (CPA1).